The primary structure comprises 212 residues: ATP-dependent Clp protease proteolytic subunit (212 aa).

Catalysis depends on Ser109, which acts as the Nucleophile. His134 is an active-site residue.

Belongs to the peptidase S14 family. In terms of assembly, fourteen ClpP subunits assemble into 2 heptameric rings which stack back to back to give a disk-like structure with a central cavity, resembling the structure of eukaryotic proteasomes.

It localises to the cytoplasm. The catalysed reaction is Hydrolysis of proteins to small peptides in the presence of ATP and magnesium. alpha-casein is the usual test substrate. In the absence of ATP, only oligopeptides shorter than five residues are hydrolyzed (such as succinyl-Leu-Tyr-|-NHMec, and Leu-Tyr-Leu-|-Tyr-Trp, in which cleavage of the -Tyr-|-Leu- and -Tyr-|-Trp bonds also occurs).. In terms of biological role, cleaves peptides in various proteins in a process that requires ATP hydrolysis. Has a chymotrypsin-like activity. Plays a major role in the degradation of misfolded proteins. In Bdellovibrio bacteriovorus (strain ATCC 15356 / DSM 50701 / NCIMB 9529 / HD100), this protein is ATP-dependent Clp protease proteolytic subunit.